A 137-amino-acid polypeptide reads, in one-letter code: Putative nickel-responsive regulator (137 aa).

Ni(2+)-binding residues include His79, His90, His92, and Cys98.

It belongs to the transcriptional regulatory CopG/NikR family. Requires Ni(2+) as cofactor.

Its function is as follows. Transcriptional regulator. The chain is Putative nickel-responsive regulator from Campylobacter concisus (strain 13826).